The following is a 1033-amino-acid chain: Calcium-transporting ATPase 3, plasma membrane-type (1033 aa).

The Cytoplasmic portion of the chain corresponds to 1 to 180 (MHSGVNGCCP…FVWEALEDTT (180 aa)). Transmembrane regions (helical) follow at residues 181–201 (LIIL…TEGW) and 204–224 (GAHD…VTGT). At 225 to 268 (SNYQQSLQFRDLDKEKRKILVQVTRNGLRQRVLIDDLLPGDAVH) the chain is on the cytoplasmic side. The next 2 helical transmembrane spans lie at 269-289 (LAVG…SVLV) and 362-382 (IGKI…QGII). Residues 383–405 (GQKYLDGLLLSWSGDDVLEILDH) are Cytoplasmic-facing. Residues 406–426 (FAVAVTIVVVAVPEGLPLAVT) traverse the membrane as a helical segment. The 4-aspartylphosphate intermediate role is filled by Asp-461. Asp-762 and Asp-766 together coordinate Mg(2+). Residues 823 to 843 (FQLTVNVVALLVNFTSACFTG) form a helical membrane-spanning segment. Topologically, residues 844–846 (DAP) are cytoplasmic. The next 2 helical transmembrane spans lie at 847-867 (LTAV…ALAL) and 928-948 (IVLN…NEIS). Residues 949–965 (SREMEDINVLRGMAGNS) are Cytoplasmic-facing. Helical transmembrane passes span 966 to 986 (IFLG…QFLG) and 999 to 1019 (WLIS…IKLI). The Cytoplasmic portion of the chain corresponds to 1020-1033 (AVEPHEKADTRRTP).

This sequence belongs to the cation transport ATPase (P-type) (TC 3.A.3) family. Type IIB subfamily.

The protein localises to the membrane. It catalyses the reaction Ca(2+)(in) + ATP + H2O = Ca(2+)(out) + ADP + phosphate + H(+). Activated by calmodulin. Functionally, this magnesium-dependent enzyme catalyzes the hydrolysis of ATP coupled with the translocation of calcium from the cytosol out of the cell, into the endoplasmic reticulum, or into organelles. The protein is Calcium-transporting ATPase 3, plasma membrane-type of Oryza sativa subsp. japonica (Rice).